The following is a 155-amino-acid chain: Small ribosomal subunit protein uS7c (155 aa).

Belongs to the universal ribosomal protein uS7 family. In terms of assembly, part of the 30S ribosomal subunit.

The protein resides in the plastid. Its subcellular location is the chloroplast. In terms of biological role, one of the primary rRNA binding proteins, it binds directly to 16S rRNA where it nucleates assembly of the head domain of the 30S subunit. The chain is Small ribosomal subunit protein uS7c (rps7) from Physcomitrium patens (Spreading-leaved earth moss).